The sequence spans 118 residues: Large ribosomal subunit protein bL20 (118 aa).

This sequence belongs to the bacterial ribosomal protein bL20 family.

In terms of biological role, binds directly to 23S ribosomal RNA and is necessary for the in vitro assembly process of the 50S ribosomal subunit. It is not involved in the protein synthesizing functions of that subunit. This is Large ribosomal subunit protein bL20 from Campylobacter concisus (strain 13826).